The sequence spans 353 residues: Transcription termination/antitermination protein NusG (353 aa).

The 35-residue stretch at 301–335 (VGDMVKIISGPFEDFAGVIKEIDPERQELKVNVTI) folds into the KOW domain.

The protein belongs to the NusG family.

With respect to regulation, regulated by autoinhibition via interaction of the N-terminal and the C-terminal domains. Autoinhibition may prevent NusG from interacting prematurely with other components of the transcription complex or non-specific interactions with other cellular components. In terms of biological role, participates in transcription elongation, termination and antitermination. The protein is Transcription termination/antitermination protein NusG of Thermotoga maritima (strain ATCC 43589 / DSM 3109 / JCM 10099 / NBRC 100826 / MSB8).